Consider the following 943-residue polypeptide: Protein translocase subunit SecA (943 aa).

ATP is bound by residues Gln90, 108-112 (GEGKT), and Asp509. Residues 535-564 (PDNEHKPPIPKQRNSKSKGGFSKKASSKLK) are disordered.

The protein belongs to the SecA family. Monomer and homodimer. Part of the essential Sec protein translocation apparatus which comprises SecA, SecYEG and auxiliary proteins SecDF. Other proteins may also be involved.

Its subcellular location is the cell inner membrane. It localises to the cellular thylakoid membrane. The protein localises to the cytoplasm. The enzyme catalyses ATP + H2O + cellular proteinSide 1 = ADP + phosphate + cellular proteinSide 2.. Part of the Sec protein translocase complex. Interacts with the SecYEG preprotein conducting channel. Has a central role in coupling the hydrolysis of ATP to the transfer of proteins into and across the cell membrane, serving as an ATP-driven molecular motor driving the stepwise translocation of polypeptide chains across the membrane. Functionally, probably participates in protein translocation into and across both the cytoplasmic and thylakoid membranes in cyanobacterial cells. The sequence is that of Protein translocase subunit SecA from Prochlorococcus marinus (strain MIT 9215).